The following is a 498-amino-acid chain: ATP synthase subunit beta, chloroplastic (498 aa).

An ATP-binding site is contributed by 172-179; it reads GGAGVGKT.

It belongs to the ATPase alpha/beta chains family. F-type ATPases have 2 components, CF(1) - the catalytic core - and CF(0) - the membrane proton channel. CF(1) has five subunits: alpha(3), beta(3), gamma(1), delta(1), epsilon(1). CF(0) has four main subunits: a(1), b(1), b'(1) and c(9-12).

Its subcellular location is the plastid. It localises to the chloroplast thylakoid membrane. It catalyses the reaction ATP + H2O + 4 H(+)(in) = ADP + phosphate + 5 H(+)(out). In terms of biological role, produces ATP from ADP in the presence of a proton gradient across the membrane. The catalytic sites are hosted primarily by the beta subunits. The protein is ATP synthase subunit beta, chloroplastic of Citrus sinensis (Sweet orange).